The primary structure comprises 59 residues: Large ribosomal subunit protein eL37 (59 aa).

Positions 20, 23, 35, and 38 each coordinate Zn(2+). The C4-type zinc finger occupies 20-38; sequence CRRCGRHSFHRRKGYCAAC.

It belongs to the eukaryotic ribosomal protein eL37 family. Zn(2+) serves as cofactor.

In terms of biological role, binds to the 23S rRNA. The protein is Large ribosomal subunit protein eL37 (rpl37e) of Archaeoglobus fulgidus (strain ATCC 49558 / DSM 4304 / JCM 9628 / NBRC 100126 / VC-16).